The chain runs to 276 residues: Chlorophyll a-b binding protein CP29.3, chloroplastic (276 aa).

Residues 1–29 (MATTTAAAASGIFGIRIQDPRPGTGRVQA) constitute a chloroplast transit peptide. A disordered region spans residues 1–53 (MATTTAAAASGIFGIRIQDPRPGTGRVQARFGFSFGKKKPAPPPKKSRQVQDD). Over residues 36 to 48 (GKKKPAPPPKKSR) the composition is skewed to basic residues. Trp59 is a chlorophyll b binding site. 3 residues coordinate chlorophyll a: Phe79, Glu141, and His144. Residues 147 to 167 (WAMLGTLGAIAVEALTGIAWQ) form a helical membrane-spanning segment. Residue Leu181 participates in chlorophyll a binding. The chain crosses the membrane as a helical span at residues 185–205 (LPFSLTTLIWIEVLVVGYIEF). Chlorophyll b-binding residues include Glu204 and Arg207. Chlorophyll a contacts are provided by Glu242, His245, Arg247, and Gln259. A helical transmembrane segment spans residues 248-268 (LAMVAFLIFALQAAFTGKGPV).

Belongs to the light-harvesting chlorophyll a/b-binding (LHC) protein family. The LHC complex consists of chlorophyll a-b binding proteins. Requires Binds at least 14 chlorophylls (8 Chl-a and 6 Chl-b) and carotenoids such as lutein and neoxanthin. as cofactor. Post-translationally, photoregulated by reversible phosphorylation of its threonine residues.

The protein localises to the plastid. The protein resides in the chloroplast thylakoid membrane. In terms of biological role, the light-harvesting complex (LHC) functions as a light receptor, it captures and delivers excitation energy to photosystems with which it is closely associated. The sequence is that of Chlorophyll a-b binding protein CP29.3, chloroplastic (LHCB4.3) from Arabidopsis thaliana (Mouse-ear cress).